A 62-amino-acid polypeptide reads, in one-letter code: Protein UL148D (62 aa).

Residues 30–50 (WWISVAIVIFIGVCLVALMYF) form a helical membrane-spanning segment.

Its subcellular location is the host membrane. This chain is Protein UL148D (UL148D), found in Human cytomegalovirus (strain Merlin) (HHV-5).